The sequence spans 79 residues: Conotoxin VnMSGL-0122 (79 aa).

The N-terminal stretch at methionine 1–serine 20 is a signal peptide. The propeptide occupies histidine 21–threonine 44. 3 cysteine pairs are disulfide-bonded: cysteine 52–cysteine 64, cysteine 56–cysteine 73, and cysteine 63–cysteine 77. Leucine 78 is modified (leucine amide).

The protein belongs to the conotoxin O3 superfamily. In terms of tissue distribution, expressed by the venom duct.

The protein resides in the secreted. This is Conotoxin VnMSGL-0122 from Conus ventricosus (Mediterranean cone).